Reading from the N-terminus, the 880-residue chain is MLTSDLRLLFLDFFAKRGHKVSPSASLISNDPSVMFTIAGMLPFIQCFLALEPPPHPRVVSVQKCIRTSDIDEVGKTPRHGTFFQMMGNFSFGDYFKKEAIEYAWEFLLSELDLAPDRLWVTIHGDDKESEKFWLLCGVPQERVQSLDSNFWSTGKAGPAGPCSEVFYDLHGGPGPGPEGDPDRYLEVWNLVFMQNLRDNDGHIISSLPKKCVDTGMGLERIAMITQGVGTIYDTDELKPILDEAGYISGKRYGKDRRDDISLRVLADHIRSSLMLVADGLRPSNEGRGYILRRLLRRSVRAAKLLGIQENCFDQLFAKAAQVMKVGYPELEGKLAEIKQVACLEEQSFSRALNAGTQLLSRSMSSSKKRVSGDLAFRLHDTHGFPIDLITEIAKDSGLDVDMDGFFTLMKEQKDRSRAALSRSKPIVSDTTGYEGLRSNFLGYEMLQVDTKITALVKDGTILTSAKQGDCVDIALEQTPFYATAGGQEADRGFIESDNFSGKVVTVFSPLPGLTVHRCEIVSGLVVSGEVVRASVDSANRFAACQSHTATHVIHAVVREMFGSTSVQMGSYNRAGYLRFDFSCSYAPTDSQRIELEERANRAIQSCLEISSTYTTLEKAVASGAIALFGERYGDTVRMVEIGGPWSRELCAGTHLRNSSEIAVVSLVSETSVASGIRRVECLTGFDAFSHFAQERALVDTVMRTLGATRQEMEGAIDDLRENLKRSKHALQTAKDKFLSAFAPRLLQEFKSVSSVRILIADLSKFLSGPLFSPFEFTAEDIRAVTLRCKKLLEEPHVLLLAAVISGRVHAACSIDLSSVKLSCMDDLSANNLIKVFLKTLDGSGGGRADFAQGAGWNAKLLDSALDNLKACVIGKLSGV.

Zn(2+) is bound by residues His548, His552, Cys651, and His655.

It belongs to the class-II aminoacyl-tRNA synthetase family. Requires Zn(2+) as cofactor.

Its subcellular location is the cytoplasm. The catalysed reaction is tRNA(Ala) + L-alanine + ATP = L-alanyl-tRNA(Ala) + AMP + diphosphate. Catalyzes the attachment of alanine to tRNA(Ala) in a two-step reaction: alanine is first activated by ATP to form Ala-AMP and then transferred to the acceptor end of tRNA(Ala). Also edits incorrectly charged Ser-tRNA(Ala) and Gly-tRNA(Ala) via its editing domain. This chain is Alanine--tRNA ligase, found in Tropheryma whipplei (strain TW08/27) (Whipple's bacillus).